Consider the following 667-residue polypeptide: MYRISPIGRKSNFHSREKCLIGLVLVTLCFLCFGGIFLLPDNFGSDRVLRVYKHFRKAGPEIFIPAPPLAAHAPHRSEDPHFIGDRQRLEQKIRAELGDMLDEPPAAGGGEPGQFQVLAQQAQAPAPVAALADQPLDQDEGHAAIPVLAAPVQGDNAASQASSHPQSSAQQHNQQQPQLPLGGGGNDQAPDTLDATLEERRQKVKEMMEHAWHNYKLYAWGKNELRPLSQRPHSASIFGSYDLGATIVDGLDTLYIMGLEKEYREGRDWIERKFSLDNISAELSVFETNIRFVGGMLTLYAFTGDPLYKEKAQHVADKLLPAFQTPTGIPYALVNTKTGVAKNYGWASGGSSILSEFGTLHLEFAYLSDITGNPLYRERVQTIRQVLKEIEKPKGLYPNFLNPKTGKWGQLHMSLGALGDSYYEYLLKAWLQSGQTDEEAREMFDEAMLAILDKMVRTSPGGLTYVSDLKFDRLEHKMDHLACFSGGLFALGAATRQNDYTDKYMEVGKGITNTCHESYIRAPTQLGPEAFRFSEAVEARALRSQEKYYILRPETFESYFVLWRLTHDQKYRDWGWEAVLALEKHCRTAHGYCGLRNVYQQEPQKDDVQQSFFLAETLKYLYLLFSDDSVLPLDEWVFNTEAHPLPIKGANAYYRQAPVTLPVSNAS.

Over 1–18 (MYRISPIGRKSNFHSREK) the chain is Cytoplasmic. The helical; Signal-anchor for type II membrane protein transmembrane segment at 19-39 (CLIGLVLVTLCFLCFGGIFLL) threads the bilayer. Over 40-667 (PDNFGSDRVL…PVTLPVSNAS (628 aa)) the chain is Lumenal. Residues 154 to 192 (GDNAASQASSHPQSSAQQHNQQQPQLPLGGGGNDQAPDT) are disordered. A compositionally biased stretch (low complexity) spans 156-178 (NAASQASSHPQSSAQQHNQQQPQ). Asn278 carries N-linked (GlcNAc...) asparagine glycosylation. Cys483 and Cys515 are disulfide-bonded. Catalysis depends on Glu529, which acts as the Proton donor. Thr640 lines the Ca(2+) pocket.

Belongs to the glycosyl hydrolase 47 family. It depends on Ca(2+) as a cofactor. Mg(2+) is required as a cofactor. Complex spatial distribution during embryogenesis, including expression in lobula plate giant neurons. Also expressed in adult wing and eyes.

The protein localises to the golgi apparatus membrane. It carries out the reaction N(4)-(alpha-D-Man-(1-&gt;2)-alpha-D-Man-(1-&gt;2)-alpha-D-Man-(1-&gt;3)-[alpha-D-Man-(1-&gt;2)-alpha-D-Man-(1-&gt;3)-[alpha-D-Man-(1-&gt;2)-alpha-D-Man-(1-&gt;6)]-alpha-D-Man-(1-&gt;6)]-beta-D-Man-(1-&gt;4)-beta-D-GlcNAc-(1-&gt;4)-beta-D-GlcNAc)-L-asparaginyl-[protein] (N-glucan mannose isomer 9A1,2,3B1,2,3) + 4 H2O = N(4)-(alpha-D-Man-(1-&gt;3)-[alpha-D-Man-(1-&gt;3)-[alpha-D-Man-(1-&gt;6)]-alpha-D-Man-(1-&gt;6)]-beta-D-Man-(1-&gt;4)-beta-D-GlcNAc-(1-&gt;4)-beta-D-GlcNAc)-L-asparaginyl-[protein] (N-glucan mannose isomer 5A1,2) + 4 beta-D-mannose. The enzyme catalyses N(4)-(alpha-D-Man-(1-&gt;2)-alpha-D-Man-(1-&gt;2)-alpha-D-Man-(1-&gt;3)-[alpha-D-Man-(1-&gt;3)-[alpha-D-Man-(1-&gt;2)-alpha-D-Man-(1-&gt;6)]-alpha-D-Man-(1-&gt;6)]-beta-D-Man-(1-&gt;4)-beta-D-GlcNAc-(1-&gt;4)-beta-D-GlcNAc)-L-asparaginyl-[protein] (N-glucan mannose isomer 8A1,2,3B1,3) + 3 H2O = N(4)-(alpha-D-Man-(1-&gt;3)-[alpha-D-Man-(1-&gt;3)-[alpha-D-Man-(1-&gt;6)]-alpha-D-Man-(1-&gt;6)]-beta-D-Man-(1-&gt;4)-beta-D-GlcNAc-(1-&gt;4)-beta-D-GlcNAc)-L-asparaginyl-[protein] (N-glucan mannose isomer 5A1,2) + 3 beta-D-mannose. It functions in the pathway protein modification; protein glycosylation. In terms of biological role, involved in the maturation of Asn-linked oligosaccharides. Progressively trim alpha-1,2-linked mannose residues from Man(9)GlcNAc(2) to produce Man(5)GlcNAc(2). This Drosophila melanogaster (Fruit fly) protein is Mannosyl-oligosaccharide alpha-1,2-mannosidase IA.